The following is a 97-amino-acid chain: MMSGRRSWPAMATVLLTLLVCLGELVDAYPAKPQAPGEHASPDELNRYYTSLRHYLNLVTRQRFGKRDFSEALLSILLFPDREDPPVKSRPEGAYLW.

Residues 1–28 form the signal peptide; it reads MMSGRRSWPAMATVLLTLLVCLGELVDA. A Phosphoserine modification is found at Ser41. Phe64 carries the post-translational modification Phenylalanine amide. Positions 68–97 are excised as a propeptide; the sequence is DFSEALLSILLFPDREDPPVKSRPEGAYLW.

The protein belongs to the NPY family.

It is found in the secreted. Functionally, this gut peptide inhibits exocrine pancreatic secretion, has a vasoconstrictory action and inhibitis jejunal and colonic mobility. This chain is Peptide YY (PYY), found in Bos taurus (Bovine).